The chain runs to 446 residues: Thymidine phosphorylase (446 aa).

This sequence belongs to the thymidine/pyrimidine-nucleoside phosphorylase family. In terms of assembly, homodimer.

It carries out the reaction thymidine + phosphate = 2-deoxy-alpha-D-ribose 1-phosphate + thymine. The protein operates within pyrimidine metabolism; dTMP biosynthesis via salvage pathway; dTMP from thymine: step 1/2. Functionally, the enzymes which catalyze the reversible phosphorolysis of pyrimidine nucleosides are involved in the degradation of these compounds and in their utilization as carbon and energy sources, or in the rescue of pyrimidine bases for nucleotide synthesis. The polypeptide is Thymidine phosphorylase (Psychromonas ingrahamii (strain DSM 17664 / CCUG 51855 / 37)).